A 319-amino-acid polypeptide reads, in one-letter code: tRNA uridine(34) hydroxylase (319 aa).

The region spanning 124-218 (LDEDTVILDA…YGKNEETKGE (95 aa)) is the Rhodanese domain. The Cysteine persulfide intermediate role is filled by C178.

This sequence belongs to the TrhO family.

It catalyses the reaction uridine(34) in tRNA + AH2 + O2 = 5-hydroxyuridine(34) in tRNA + A + H2O. Functionally, catalyzes oxygen-dependent 5-hydroxyuridine (ho5U) modification at position 34 in tRNAs. This Listeria monocytogenes serotype 4a (strain HCC23) protein is tRNA uridine(34) hydroxylase.